Consider the following 783-residue polypeptide: Coiled-coil domain-containing protein 30 (783 aa).

Residues 1–22 (MSQEKNEMFESEWSKEREREKQ) are compositionally biased toward basic and acidic residues. 3 disordered regions span residues 1–26 (MSQEKNEMFESEWSKEREREKQLASG), 101–191 (LGGK…LTMK), and 209–231 (LLQSQSSGDSSDDSGAQHPSSGE). A coiled-coil region spans residues 22–98 (QLASGLDTAE…LSQEFAQLNH (77 aa)). Over residues 106–115 (APSNLITSEN) the composition is skewed to polar residues. Positions 131–191 (IQSRKEETEE…EEKEQQLTMK (61 aa)) are enriched in basic and acidic residues. Coiled coils occupy residues 165 to 497 (REGQ…LNVH) and 527 to 622 (DKRI…RIIR). A disordered region spans residues 731–755 (EEIKSKEAMASSKSPEKSPENLVCS).

This sequence belongs to the prefoldin subunit beta family. As to expression, expressed in brain, kidney, pancreas, placenta, liver, thymus and prostate.

This is Coiled-coil domain-containing protein 30 (CCDC30) from Homo sapiens (Human).